The chain runs to 352 residues: Ion-translocating oxidoreductase complex subunit D (352 aa).

4 helical membrane passes run Ile-20 to Gly-40, Leu-44 to Leu-64, Ala-78 to Ala-109, and Pro-123 to Leu-143. Thr-187 is subject to FMN phosphoryl threonine. Helical transmembrane passes span Val-214–Leu-234, Trp-242–Phe-262, Leu-267–Leu-287, Leu-301–Pro-321, and Asp-322–Thr-342.

This sequence belongs to the NqrB/RnfD family. The complex is composed of six subunits: RsxA, RsxB, RsxC, RsxD, RsxE and RsxG. It depends on FMN as a cofactor.

The protein resides in the cell inner membrane. Part of a membrane-bound complex that couples electron transfer with translocation of ions across the membrane. Required to maintain the reduced state of SoxR. The chain is Ion-translocating oxidoreductase complex subunit D from Salmonella arizonae (strain ATCC BAA-731 / CDC346-86 / RSK2980).